The primary structure comprises 103 residues: Pyrimidine/purine nucleoside phosphorylase (103 aa).

Belongs to the nucleoside phosphorylase PpnP family.

The enzyme catalyses a purine D-ribonucleoside + phosphate = a purine nucleobase + alpha-D-ribose 1-phosphate. It catalyses the reaction adenosine + phosphate = alpha-D-ribose 1-phosphate + adenine. The catalysed reaction is cytidine + phosphate = cytosine + alpha-D-ribose 1-phosphate. It carries out the reaction guanosine + phosphate = alpha-D-ribose 1-phosphate + guanine. The enzyme catalyses inosine + phosphate = alpha-D-ribose 1-phosphate + hypoxanthine. It catalyses the reaction thymidine + phosphate = 2-deoxy-alpha-D-ribose 1-phosphate + thymine. The catalysed reaction is uridine + phosphate = alpha-D-ribose 1-phosphate + uracil. It carries out the reaction xanthosine + phosphate = alpha-D-ribose 1-phosphate + xanthine. Catalyzes the phosphorolysis of diverse nucleosides, yielding D-ribose 1-phosphate and the respective free bases. Can use uridine, adenosine, guanosine, cytidine, thymidine, inosine and xanthosine as substrates. Also catalyzes the reverse reactions. This Sulfurovum sp. (strain NBC37-1) protein is Pyrimidine/purine nucleoside phosphorylase.